The chain runs to 71 residues: Small ribosomal subunit protein eS17 (71 aa).

Belongs to the eukaryotic ribosomal protein eS17 family.

This Pyrobaculum islandicum (strain DSM 4184 / JCM 9189 / GEO3) protein is Small ribosomal subunit protein eS17.